The sequence spans 55 residues: uncharacterized protein (55 aa).

Residues Met1–Ser30 form a disordered region.

This is an uncharacterized protein from Frog virus 3 (isolate Goorha) (FV-3).